The following is a 449-amino-acid chain: Heterogeneous nuclear ribonucleoprotein H2 (449 aa).

Position 1 is an N-acetylmethionine (Met-1). Residue Met-2 is modified to N-acetylmethionine; in Heterogeneous nuclear ribonucleoprotein H2, N-terminally processed. The region spanning 11 to 90 is the RRM 1 domain; that stretch reads FVVKVRGLPW…RYVEVFKSNS (80 aa). At Ser-23 the chain carries Phosphoserine. A Glycyl lysine isopeptide (Lys-Gly) (interchain with G-Cter in SUMO2) cross-link involves residue Lys-35. Residues Ser-54 and Ser-63 each carry the phosphoserine modification. Lys-87 participates in a covalent cross-link: Glycyl lysine isopeptide (Lys-Gly) (interchain with G-Cter in SUMO2). Ser-90 is subject to Phosphoserine. Lys-98 participates in a covalent cross-link: Glycyl lysine isopeptide (Lys-Gly) (interchain with G-Cter in SUMO2). The RRM 2 domain maps to 111–188; sequence GFVRLRGLPF…RYIEIFKSSR (78 aa). Arg-233 carries the post-translational modification Dimethylated arginine; alternate. The residue at position 233 (Arg-233) is an Omega-N-methylarginine; alternate. A 1-1 repeat occupies 234–249; the sequence is GAYGGGYGGYDDYGGY. A 2 X 16 AA Gly-rich approximate repeats region spans residues 234 to 433; sequence GAYGGGYGGY…YGGQSSMSGY (200 aa). The residue at position 246 (Tyr-246) is a Phosphotyrosine. Residues 289–364 enclose the RRM 3 domain; sequence HCVHMRGLPY…RYVELFLNST (76 aa). Position 310 is a phosphoserine (Ser-310). 3 consecutive repeat copies span residues 354–372, 374–392, and 418–433. The interval 354-392 is 2 X 19 AA perfect repeats; sequence HRYVELFLNSTAGTSGGAYDHSYVELFLNSTAGASGGAY.

As to quaternary structure, component of a ribonucleoprotein complex containing mRNAs and RNA-binding proteins including DDX5, HNRNPH2 and SRSF1 as well as splicing regulator ARVCF. Interacts with TXNL4/DIM1. Expressed ubiquitously.

Its subcellular location is the nucleus. It is found in the nucleoplasm. Functionally, this protein is a component of the heterogeneous nuclear ribonucleoprotein (hnRNP) complexes which provide the substrate for the processing events that pre-mRNAs undergo before becoming functional, translatable mRNAs in the cytoplasm. Binds poly(RG). The protein is Heterogeneous nuclear ribonucleoprotein H2 (HNRNPH2) of Homo sapiens (Human).